The sequence spans 399 residues: Transaminase BacF (399 aa).

Pyridoxal 5'-phosphate contacts are provided by residues 103-104, Y128, N178, Y209, and 236-238; these read GK and SFS. K239 is modified (N6-(pyridoxal phosphate)lysine). R247 provides a ligand contact to pyridoxal 5'-phosphate.

This sequence belongs to the class-I pyridoxal-phosphate-dependent aminotransferase family. As to quaternary structure, homodimer. The cofactor is pyridoxal 5'-phosphate.

It localises to the cytoplasm. The protein operates within antibiotic biosynthesis; bacilysin biosynthesis. Its function is as follows. Part of the bacABCDEF operon responsible for the biosynthesis of the nonribosomally synthesized dipeptide antibiotic bacilysin, composed of L-alanine and L-anticapsin. Bacilysin is an irreversible inactivator of the glutaminase domain of glucosamine synthetase. Catalyzes the reductive amination of the C2 ketone of tetrahydro-hydroxyphenylpyruvate (H4HPP), with L-Phe as an amino donor, to yield tetrahydrotyrosine (H4Tyr) diastereomer. D-Phe is not an effective amino donor. BacF associated to BacG converts 3E,7R- and 3Z,7R-ex-H2HPP to 2S,4R,7R- and 2S,4S,7R-H4Tyr, respectively. Given that bacilysin has the 2S,4S stereochemistry in its anticapsin moiety, it is likely that the 2S,4S-H4Tyr is the diastereomer used for the biosynthesis. The protein is Transaminase BacF of Bacillus subtilis (strain 168).